The following is a 1477-amino-acid chain: FHA domain-containing protein PS1 (1477 aa).

One can recognise an FHA domain in the interval 64 to 115 (LVVGRHPDCDILLTHPSISRFHLEIRSISSRQKLFVTDLSSVHGTWVRDLRI). Disordered stretches follow at residues 188–218 (ENTTSGDEGVLHLDVTSEGTGSSVPSEDEDT), 588–644 (LGKA…PKSF), 789–818 (PNSFSKAEPTLETEDSRQQARGLVGSDSEF), 832–911 (LNQK…LIGS), 942–979 (ALAAKTSEDTKLIEELSSSDSGSQENQTPETHAVRDDV), 1004–1030 (IRTNKSQGKQKQTGRQPKDKLHRKQAL), and 1159–1225 (VEQE…IRSS). Residues 589 to 607 (GKADIRSHEENGESEDSRQ) are compositionally biased toward basic and acidic residues. A compositionally biased stretch (polar residues) spans 832-849 (LNQKRNGETKVSSRQASP). Residues 870–883 (QSLCSSSQPPSESE) are compositionally biased toward low complexity. Composition is skewed to polar residues over residues 885–897 (NPATDQDQESGII), 957–971 (LSSSDSGSQENQTPE), 1007–1018 (NKSQGKQKQTGR), and 1198–1212 (SSFQSQSYTEASSTA). Over residues 1213–1225 (SARNNISRGIRSS) the composition is skewed to low complexity.

Functionally, required for normal spindle orientation at male meiosis II and normal formation of tetrad of microspores. Not involved in female meiosis. In Arabidopsis thaliana (Mouse-ear cress), this protein is FHA domain-containing protein PS1.